The chain runs to 124 residues: Meiotically up-regulated gene 103 protein (124 aa).

It localises to the nucleus. The protein localises to the nucleolus. Its function is as follows. Has a role in meiosis. The protein is Meiotically up-regulated gene 103 protein (mug103) of Schizosaccharomyces pombe (strain 972 / ATCC 24843) (Fission yeast).